Reading from the N-terminus, the 341-residue chain is tRNA N6-adenosine threonylcarbamoyltransferase (341 aa).

Fe cation is bound by residues His120 and His124. Substrate is bound by residues 142–146 (VVSGG), Asp175, Gly188, Asp192, and Asn281. Asp310 lines the Fe cation pocket.

The protein belongs to the KAE1 / TsaD family. Fe(2+) is required as a cofactor.

The protein localises to the cytoplasm. The enzyme catalyses L-threonylcarbamoyladenylate + adenosine(37) in tRNA = N(6)-L-threonylcarbamoyladenosine(37) in tRNA + AMP + H(+). Functionally, required for the formation of a threonylcarbamoyl group on adenosine at position 37 (t(6)A37) in tRNAs that read codons beginning with adenine. Is involved in the transfer of the threonylcarbamoyl moiety of threonylcarbamoyl-AMP (TC-AMP) to the N6 group of A37, together with TsaE and TsaB. TsaD likely plays a direct catalytic role in this reaction. This is tRNA N6-adenosine threonylcarbamoyltransferase from Anoxybacillus flavithermus (strain DSM 21510 / WK1).